The chain runs to 675 residues: Methionine--tRNA ligase (675 aa).

Residues Pro-15–His-25 carry the 'HIGH' region motif. Residues Cys-146, Cys-149, Cys-159, and Cys-162 each coordinate Zn(2+). Residues Lys-332–Ser-336 carry the 'KMSKS' region motif. Residue Lys-335 coordinates ATP. Residues Asp-573–Lys-675 enclose the tRNA-binding domain.

It belongs to the class-I aminoacyl-tRNA synthetase family. MetG type 1 subfamily. Homodimer. Requires Zn(2+) as cofactor.

The protein resides in the cytoplasm. The enzyme catalyses tRNA(Met) + L-methionine + ATP = L-methionyl-tRNA(Met) + AMP + diphosphate. Is required not only for elongation of protein synthesis but also for the initiation of all mRNA translation through initiator tRNA(fMet) aminoacylation. This is Methionine--tRNA ligase from Yersinia pseudotuberculosis serotype I (strain IP32953).